The chain runs to 289 residues: Elongation factor Ts (289 aa).

Residues 82–85 (TDFL) form an involved in Mg(2+) ion dislocation from EF-Tu region.

This sequence belongs to the EF-Ts family.

It localises to the cytoplasm. Its function is as follows. Associates with the EF-Tu.GDP complex and induces the exchange of GDP to GTP. It remains bound to the aminoacyl-tRNA.EF-Tu.GTP complex up to the GTP hydrolysis stage on the ribosome. In Pseudomonas aeruginosa (strain LESB58), this protein is Elongation factor Ts.